The following is a 275-amino-acid chain: MSHCSSRALTLLSSVFGACGLLLVGIAVSTDYWLYMEEGTVLPQNQTTEVKMALHAGLWRVCFFAGREKGRCVASEYFLEPEINLVTENTENILKTVRTATPFPMVSLFLVFTAFVISNIGHIRPQRTILAFVSGIFFILSGLSLVVGLVLYISSINDEVMNRPSSSEQYFHYRYGWSFAFAASSFLLKEGAGVMSVYLFTKRYAEEEMYRPHPAFYRPRLSDCSDYSGQFLQPEAWRRGRSPSDISSDVSIQMTQNYPPAIKYPDHLHISTSPC.

Helical transmembrane passes span 8-28, 103-123, 129-149, and 179-199; these read ALTL…GIAV, FPMV…IGHI, ILAF…VVGL, and FAFA…SVYL. A phosphoserine mark is found at Ser222, Ser225, and Ser273.

It belongs to the PMP-22/EMP/MP20 family. CACNG subfamily. As to quaternary structure, interacts with CACNA1C. Identified in a complex with the L-type calcium channel subunits CACNA1C, CACNA2D1 and either CACNB1 or CACNB2. Acts as an auxiliary subunit for AMPA-selective glutamate receptors (AMPARs), such as GRIA1 and GRIA2. Detected in heart left ventricle. Widely expressed.

The protein localises to the cell membrane. Regulates the activity of L-type calcium channels that contain CACNA1C as pore-forming subunit. Regulates the trafficking and gating properties of AMPA-selective glutamate receptors (AMPARs). Promotes their targeting to the cell membrane and synapses and modulates their gating properties by slowing their rates of activation, deactivation and desensitization and by mediating their resensitization. Displays subunit-specific AMPA receptor regulation. Shows specificity only for GRIA1 and GRIA2. In Homo sapiens (Human), this protein is Voltage-dependent calcium channel gamma-7 subunit (CACNG7).